Consider the following 424-residue polypeptide: Serine--tRNA ligase (424 aa).

231–233 (TAE) is an L-serine binding site. 262–264 (RSE) contacts ATP. Glutamate 285 provides a ligand contact to L-serine. 349-352 (EISS) is an ATP binding site. Residue serine 385 participates in L-serine binding.

Belongs to the class-II aminoacyl-tRNA synthetase family. Type-1 seryl-tRNA synthetase subfamily. Homodimer. The tRNA molecule binds across the dimer.

The protein localises to the cytoplasm. It catalyses the reaction tRNA(Ser) + L-serine + ATP = L-seryl-tRNA(Ser) + AMP + diphosphate + H(+). The catalysed reaction is tRNA(Sec) + L-serine + ATP = L-seryl-tRNA(Sec) + AMP + diphosphate + H(+). It participates in aminoacyl-tRNA biosynthesis; selenocysteinyl-tRNA(Sec) biosynthesis; L-seryl-tRNA(Sec) from L-serine and tRNA(Sec): step 1/1. In terms of biological role, catalyzes the attachment of serine to tRNA(Ser). Is also able to aminoacylate tRNA(Sec) with serine, to form the misacylated tRNA L-seryl-tRNA(Sec), which will be further converted into selenocysteinyl-tRNA(Sec). This chain is Serine--tRNA ligase, found in Bacillus anthracis (strain A0248).